A 103-amino-acid polypeptide reads, in one-letter code: Large ribosomal subunit protein bL21 (103 aa).

Belongs to the bacterial ribosomal protein bL21 family. In terms of assembly, part of the 50S ribosomal subunit. Contacts protein L20.

Functionally, this protein binds to 23S rRNA in the presence of protein L20. This chain is Large ribosomal subunit protein bL21, found in Nocardia farcinica (strain IFM 10152).